Reading from the N-terminus, the 102-residue chain is Urease subunit beta (102 aa).

The protein belongs to the urease beta subunit family. In terms of assembly, heterotrimer of UreA (gamma), UreB (beta) and UreC (alpha) subunits. Three heterotrimers associate to form the active enzyme.

It localises to the cytoplasm. It carries out the reaction urea + 2 H2O + H(+) = hydrogencarbonate + 2 NH4(+). The protein operates within nitrogen metabolism; urea degradation; CO(2) and NH(3) from urea (urease route): step 1/1. The polypeptide is Urease subunit beta (Acinetobacter baylyi (strain ATCC 33305 / BD413 / ADP1)).